A 250-amino-acid chain; its full sequence is ATP synthase subunit a (250 aa).

6 helical membrane passes run 29–49 (ASLFMVASAVLSAGFLYFATS), 84–104 (FFPLVFSLFMFVLTANLLGMV), 114–134 (IIVTFALALLVILTVILYGFI), 143–163 (LFVPQGVPGILLPLVVIIEII), 185–205 (ITLKVFAGFVASLGTLGALGI), and 208–228 (AILPLIMTVALTGLEFLVAFL).

Belongs to the ATPase A chain family. F-type ATPases have 2 components, CF(1) - the catalytic core - and CF(0) - the membrane proton channel. CF(1) has five subunits: alpha(3), beta(3), gamma(1), delta(1), epsilon(1). CF(0) has three main subunits: a(1), b(2) and c(9-12). The alpha and beta chains form an alternating ring which encloses part of the gamma chain. CF(1) is attached to CF(0) by a central stalk formed by the gamma and epsilon chains, while a peripheral stalk is formed by the delta and b chains.

The protein localises to the cell inner membrane. Key component of the proton channel; it plays a direct role in the translocation of protons across the membrane. The chain is ATP synthase subunit a from Rhizobium rhizogenes (strain K84 / ATCC BAA-868) (Agrobacterium radiobacter).